The chain runs to 378 residues: MNNTEFYDRLGVSKNASADEIKKAYRKLSKKYHPDINKEPGAEDKYKEVQEAYETLSDDQKRAAYDQYGAAGANGGFGGAGGFGGFNGAGGFGGFEDIFSSFFGGGGSSRNPNAPRQGDDLQYRVNLTFEEAIFGTEKEVKYHREAGCRTCNGSGAKPGTSPVTCGRCHGAGVINVDTQTPLGMMRRQVTCDVCHGRGKEIKYPCTTCHGTGHEKQAHSVHVKIPAGVETGQQIRLAGQGEAGFNGGPYGDLYVVVSVEASDKFEREGTTIFYNLNLNFVQAALGDTVDIPTVHGDVELVIPEGTQTGKKFRLRSKGAPSLRGGAVGDQYVTVNVVTPTGLNDRQKVALKEFAAAGDLKVNPKKKGFFDHIKDAFDGE.

A J domain is found at 5-69 (EFYDRLGVSK…QKRAAYDQYG (65 aa)). The segment at 135-217 (GTEKEVKYHR…CHGTGHEKQA (83 aa)) adopts a CR-type zinc-finger fold. Zn(2+) is bound by residues Cys148, Cys151, Cys165, Cys168, Cys191, Cys194, Cys205, and Cys208. CXXCXGXG motif repeat units lie at residues 148–155 (CRTCNGSG), 165–172 (CGRCHGAG), 191–198 (CDVCHGRG), and 205–212 (CTTCHGTG).

Belongs to the DnaJ family. As to quaternary structure, homodimer. It depends on Zn(2+) as a cofactor.

It is found in the cytoplasm. Functionally, participates actively in the response to hyperosmotic and heat shock by preventing the aggregation of stress-denatured proteins and by disaggregating proteins, also in an autonomous, DnaK-independent fashion. Unfolded proteins bind initially to DnaJ; upon interaction with the DnaJ-bound protein, DnaK hydrolyzes its bound ATP, resulting in the formation of a stable complex. GrpE releases ADP from DnaK; ATP binding to DnaK triggers the release of the substrate protein, thus completing the reaction cycle. Several rounds of ATP-dependent interactions between DnaJ, DnaK and GrpE are required for fully efficient folding. Also involved, together with DnaK and GrpE, in the DNA replication of plasmids through activation of initiation proteins. The protein is Chaperone protein DnaJ of Streptococcus pneumoniae serotype 4 (strain ATCC BAA-334 / TIGR4).